Reading from the N-terminus, the 152-residue chain is Transcriptional regulator MraZ (152 aa).

SpoVT-AbrB domains lie at 5 to 52 (VTSI…PLHE) and 81 to 124 (ATEC…QDKQ).

It belongs to the MraZ family. As to quaternary structure, forms oligomers.

Its subcellular location is the cytoplasm. The protein resides in the nucleoid. This Actinobacillus pleuropneumoniae serotype 5b (strain L20) protein is Transcriptional regulator MraZ.